The sequence spans 182 residues: Ribosome-recycling factor (182 aa).

It belongs to the RRF family.

The protein resides in the cytoplasm. Functionally, responsible for the release of ribosomes from messenger RNA at the termination of protein biosynthesis. May increase the efficiency of translation by recycling ribosomes from one round of translation to another. The polypeptide is Ribosome-recycling factor (Mycoplasma capricolum subsp. capricolum (strain California kid / ATCC 27343 / NCTC 10154)).